Consider the following 379-residue polypeptide: Alcohol dehydrogenase 2 (379 aa).

Cysteine 48 contributes to the Zn(2+) binding site. 49–53 serves as a coordination point for NAD(+); sequence HTDML. Residues histidine 69, cysteine 100, cysteine 103, cysteine 106, cysteine 114, and cysteine 178 each coordinate Zn(2+). Residues 203 to 208, aspartate 227, lysine 232, 275 to 277, 298 to 300, and 321 to 323 each bind NAD(+); these read GLGAVG, TGI, IGA, and TTF.

It belongs to the zinc-containing alcohol dehydrogenase family. Class-IV subfamily. In terms of assembly, homodimer. Zn(2+) serves as cofactor. In terms of tissue distribution, expressed in flowers and disk florets.

The catalysed reaction is (R,R)-chrysanthemol + NAD(+) = (1R,3R)-chrysanthemal + NADH + H(+). It catalyses the reaction nerol + NAD(+) = neral + NADH + H(+). It carries out the reaction (S)-(-)-citronellol + NAD(+) = (S)-(-)-citronellal + NADH + H(+). The enzyme catalyses perillyl alcohol + NAD(+) = perillyl aldehyde + NADH + H(+). The catalysed reaction is (6E)-8-hydroxygeraniol + NAD(+) = (6E)-8-hydroxygeranial + NADH + H(+). It catalyses the reaction (2E)-geraniol + NAD(+) = (2E)-geranial + NADH + H(+). Its pathway is isoprenoid biosynthesis. Functionally, component of the monoterpenoid pyrethrins biosynthesis; pyrethrins are widely used plant-derived pesticide. Mediates the conversion of trans-chrysanthemol into trans-chrysanthemal. This Tanacetum cinerariifolium (Dalmatian daisy) protein is Alcohol dehydrogenase 2.